A 446-amino-acid polypeptide reads, in one-letter code: C-type lectin domain family 18 member A (446 aa).

Residues 1–26 (MLHPETSPGRGHLLAVLLALLGTAWA) form the signal peptide. In terms of domain architecture, SCP spans 52–182 (LSLHNRLRSW…AAIEAFVCAY (131 aa)). A glycan (N-linked (GlcNAc...) asparagine) is linked at N144. The EGF-like domain occupies 228–261 (PRNPCRMSCQNHGRLNISTCHCHCPPGYTGRYCQ). 4 disulfides stabilise this stretch: C236-C249, C251-C260, C327-C432, and C408-C424. The C-type lectin domain occupies 306-433 (IDGDCFMVSS…CKTRNRYICQ (128 aa)).

In terms of processing, N-glycosylated. Dectected in all cell lines tested and in peripheral blood cells.

Its subcellular location is the secreted. It is found in the endoplasmic reticulum. The protein localises to the golgi apparatus. The protein resides in the endosome. Its function is as follows. Binds polysaccharides in a Ca(2+)-independent manner with a preferentially binding to fucoidan, beta-glucans and galactans. The polypeptide is C-type lectin domain family 18 member A (CLEC18A) (Homo sapiens (Human)).